The sequence spans 1456 residues: Retrovirus-related Pol polyprotein from transposon RE2 (1456 aa).

Residues 205 to 252 (NVVTHRNTNTNRNQNNRGDNRNYNNNNNRSNSWQPSSSGSRSDNRQPK) are disordered. The span at 210 to 245 (RNTNTNRNQNNRGDNRNYNNNNNRSNSWQPSSSGSR) shows a compositional bias: low complexity. The segment at 257-273 (RCQICSVQGHSAKRCPQ) adopts a CCHC-type zinc-finger fold. Over residues 276–291 (QFQSTTNQQQSTSPFT) the composition is skewed to low complexity. Positions 276–295 (QFQSTTNQQQSTSPFTPWQP) are disordered. Aspartate 313 (for protease activity) is an active-site residue. Residues 498 to 661 (TSSKPLEYIY…SPFQKLFGQP (164 aa)) enclose the Integrase catalytic domain. The Mg(2+) site is built by aspartate 509 and aspartate 571. The span at 738–754 (STSQEQRSDSAPNWPSH) shows a compositional bias: polar residues. Residues 738-896 (STSQEQRSDS…PPLPPVLPAP (159 aa)) are disordered. Over residues 793 to 814 (SSSNLPSSSISSPSSSEPTAPS) the composition is skewed to low complexity. Over residues 816 to 827 (NGPQPTAQPHQT) the composition is skewed to polar residues. Composition is skewed to low complexity over residues 828–841 (QNSNSNSPILNNPN) and 849–886 (SPNQNSPLPQSPISSPHIPTPSTSISEPNSPSSSSTST). The segment covering 887 to 896 (PPLPPVLPAP) has biased composition (pro residues). In terms of domain architecture, Reverse transcriptase Ty1/copia-type spans 965–1208 (NHTWDLVPPP…LTAKPVATPM (244 aa)).

The enzyme catalyses DNA(n) + a 2'-deoxyribonucleoside 5'-triphosphate = DNA(n+1) + diphosphate. The sequence is that of Retrovirus-related Pol polyprotein from transposon RE2 (RE2) from Arabidopsis thaliana (Mouse-ear cress).